The sequence spans 437 residues: Phosphomethylpyrimidine synthase (437 aa).

Substrate is bound by residues Asn69, Met98, Tyr127, His163, 185-187, 226-229, and Glu265; these read SRG and DACR. His269 provides a ligand contact to Zn(2+). Tyr292 serves as a coordination point for substrate. His333 provides a ligand contact to Zn(2+). Positions 409, 412, and 416 each coordinate [4Fe-4S] cluster.

The protein belongs to the ThiC family. Requires [4Fe-4S] cluster as cofactor.

It catalyses the reaction 5-amino-1-(5-phospho-beta-D-ribosyl)imidazole + S-adenosyl-L-methionine = 4-amino-2-methyl-5-(phosphooxymethyl)pyrimidine + CO + 5'-deoxyadenosine + formate + L-methionine + 3 H(+). It functions in the pathway cofactor biosynthesis; thiamine diphosphate biosynthesis. In terms of biological role, catalyzes the synthesis of the hydroxymethylpyrimidine phosphate (HMP-P) moiety of thiamine from aminoimidazole ribotide (AIR) in a radical S-adenosyl-L-methionine (SAM)-dependent reaction. The protein is Phosphomethylpyrimidine synthase of Clostridium kluyveri (strain NBRC 12016).